The sequence spans 340 residues: Protein AC11 (340 aa).

In terms of biological role, plays an essential role in nucleocapsid egress from the host nucleus to form the budded virion (BV). Does not participate in nucleocapsid formation. In Autographa californica nuclear polyhedrosis virus (AcMNPV), this protein is Protein AC11.